Consider the following 319-residue polypeptide: tRNA dimethylallyltransferase (319 aa).

ATP is bound at residue 16 to 23 (GPTASGKS). Substrate is bound at residue 18–23 (TASGKS). The interval 46 to 49 (DSMV) is interaction with substrate tRNA.

This sequence belongs to the IPP transferase family. As to quaternary structure, monomer. The cofactor is Mg(2+).

It carries out the reaction adenosine(37) in tRNA + dimethylallyl diphosphate = N(6)-dimethylallyladenosine(37) in tRNA + diphosphate. In terms of biological role, catalyzes the transfer of a dimethylallyl group onto the adenine at position 37 in tRNAs that read codons beginning with uridine, leading to the formation of N6-(dimethylallyl)adenosine (i(6)A). In Cutibacterium acnes (strain DSM 16379 / KPA171202) (Propionibacterium acnes), this protein is tRNA dimethylallyltransferase.